We begin with the raw amino-acid sequence, 343 residues long: Cytoplasmic tRNA 2-thiolation protein 1 (343 aa).

It belongs to the TtcA family. CTU1/NCS6/ATPBD3 subfamily.

The protein localises to the cytoplasm. Its pathway is tRNA modification; 5-methoxycarbonylmethyl-2-thiouridine-tRNA biosynthesis. In terms of biological role, plays a central role in 2-thiolation of mcm(5)S(2)U at tRNA wobble positions of tRNA(Lys), tRNA(Glu) and tRNA(Gln). Directly binds tRNAs and probably acts by catalyzing adenylation of tRNAs, an intermediate required for 2-thiolation. It is unclear whether it acts as a sulfurtransferase that transfers sulfur from thiocarboxylated URM1 onto the uridine of tRNAs at wobble position. In Drosophila pseudoobscura pseudoobscura (Fruit fly), this protein is Cytoplasmic tRNA 2-thiolation protein 1.